We begin with the raw amino-acid sequence, 135 residues long: Small ribosomal subunit protein bS6 (135 aa).

Residues 104 to 135 (FSRLDRNGHIGHDEKHPRSPSRQREDVIEGVE) form a disordered region.

The protein belongs to the bacterial ribosomal protein bS6 family.

Binds together with bS18 to 16S ribosomal RNA. This is Small ribosomal subunit protein bS6 from Bartonella henselae (strain ATCC 49882 / DSM 28221 / CCUG 30454 / Houston 1) (Rochalimaea henselae).